Consider the following 757-residue polypeptide: Transcription regulator rua1 (757 aa).

Disordered regions lie at residues 122-169 (SSGS…LPVS), 181-218 (NHQV…SNQD), 237-295 (RNTG…NGYT), 372-393 (SADC…PYPL), and 422-582 (MELQ…IGNA). The span at 125 to 165 (SATKSEPSTCSSSTDFSMSSTADASTAPQHSSSGDSSMSSG) shows a compositional bias: low complexity. Polar residues-rich tracts occupy residues 181–190 (NHQVTTQDAS) and 200–218 (QPPS…SNQD). The segment covering 240–249 (GHRQHNRHQK) has biased composition (basic residues). Polar residues predominate over residues 253-277 (LPQGQSCTNSGSSSRQVTRPNSPNH). Positions 379–393 (PRPPSNSPEPHPYPL) are enriched in pro residues. Polar residues predominate over residues 428–437 (PARSNSTFGR). A compositionally biased stretch (basic residues) spans 439–453 (SQRHHQPPPSHRQRS). Composition is skewed to low complexity over residues 454 to 465 (RTSASSISNTNA), 494 to 510 (ASQS…ATDA), and 543 to 582 (TSSS…IGNA). A C2H2-type 1 degenerate zinc finger spans residues 661-692 (REGWCSLCPQGEWYSMKRSQYLYHMQFDHGIS). The C2H2-type 2; degenerate zinc-finger motif lies at 717-750 (GLCHHCNKWIPICFGPQRKRDFKAWFKHARKCHR).

Its subcellular location is the nucleus. In terms of biological role, transcription factor; part of the gene cluster that mediates the biosynthesis of the glycolipid biosurfactant ustilagic acid (UA). UA is a secreted cellobiose glycolipid that is toxic for many microorganisms and confers biocontrol activity to U.maydis. Recognizes and binds to the specific 5'-T/G-G/T-C-G-C-A-T-A/T-C/T-C/T-G/A-3' upstream activating sequence found in all promoters of the UA biosynthesis genes. The polypeptide is Transcription regulator rua1 (Mycosarcoma maydis (Corn smut fungus)).